The primary structure comprises 617 residues: Dihydroxy-acid dehydratase (617 aa).

A Mg(2+)-binding site is contributed by Asp81. A [2Fe-2S] cluster-binding site is contributed by Cys122. Mg(2+) is bound by residues Asp123 and Lys124. The residue at position 124 (Lys124) is an N6-carboxylysine. Cys197 is a binding site for [2Fe-2S] cluster. Glu494 contacts Mg(2+). Ser520 (proton acceptor) is an active-site residue.

Belongs to the IlvD/Edd family. Homodimer. [2Fe-2S] cluster is required as a cofactor. It depends on Mg(2+) as a cofactor.

The catalysed reaction is (2R)-2,3-dihydroxy-3-methylbutanoate = 3-methyl-2-oxobutanoate + H2O. It catalyses the reaction (2R,3R)-2,3-dihydroxy-3-methylpentanoate = (S)-3-methyl-2-oxopentanoate + H2O. The protein operates within amino-acid biosynthesis; L-isoleucine biosynthesis; L-isoleucine from 2-oxobutanoate: step 3/4. It functions in the pathway amino-acid biosynthesis; L-valine biosynthesis; L-valine from pyruvate: step 3/4. Functionally, functions in the biosynthesis of branched-chain amino acids. Catalyzes the dehydration of (2R,3R)-2,3-dihydroxy-3-methylpentanoate (2,3-dihydroxy-3-methylvalerate) into 2-oxo-3-methylpentanoate (2-oxo-3-methylvalerate) and of (2R)-2,3-dihydroxy-3-methylbutanoate (2,3-dihydroxyisovalerate) into 2-oxo-3-methylbutanoate (2-oxoisovalerate), the penultimate precursor to L-isoleucine and L-valine, respectively. The sequence is that of Dihydroxy-acid dehydratase from Parafrankia sp. (strain EAN1pec).